Here is a 163-residue protein sequence, read N- to C-terminus: Large ribosomal subunit protein uL10 (163 aa).

This sequence belongs to the universal ribosomal protein uL10 family. In terms of assembly, part of the ribosomal stalk of the 50S ribosomal subunit. The N-terminus interacts with L11 and the large rRNA to form the base of the stalk. The C-terminus forms an elongated spine to which L12 dimers bind in a sequential fashion forming a multimeric L10(L12)X complex.

Its function is as follows. Forms part of the ribosomal stalk, playing a central role in the interaction of the ribosome with GTP-bound translation factors. The protein is Large ribosomal subunit protein uL10 of Mannheimia succiniciproducens (strain KCTC 0769BP / MBEL55E).